The chain runs to 78 residues: Large ribosomal subunit protein uL10 (78 aa).

Low complexity predominate over residues 40–50; the sequence is AAAAAATAPAA. The tract at residues 40–78 is disordered; the sequence is AAAAAATAPAAETKKEEKKEEKKEETEESDDDIGLSLFH. Residues 51 to 64 are compositionally biased toward basic and acidic residues; the sequence is ETKKEEKKEEKKEE.

This sequence belongs to the universal ribosomal protein uL10 family. As to quaternary structure, P0 forms a pentameric complex by interaction with dimers of P1 and P2.

The protein resides in the nucleus. The protein localises to the cytoplasm. Its function is as follows. Ribosomal protein P0 is the functional equivalent of E.coli protein L10. In Culicoides nubeculosus (Biting midge), this protein is Large ribosomal subunit protein uL10.